Consider the following 508-residue polypeptide: Ras association domain-containing protein 10 (508 aa).

One can recognise a Ras-associating domain in the interval 1–133; sequence MDPSEKKISV…VRFVLVRSEA (133 aa). Disordered stretches follow at residues 51 to 81 and 186 to 221; these read RRGLTEDPSGQLELPEPPDENDEDDDDAMPP and KLNRRRQQQPSSPCSSTSSSTASSCSSSARTHESAS. Residues 66-78 show a composition bias toward acidic residues; that stretch reads EPPDENDEDDDDA. Low complexity predominate over residues 195 to 214; it reads PSSPCSSTSSSTASSCSSSA. 2 coiled-coil regions span residues 235-266 and 319-358; these read QDHTIRQQVQRLRELDREIDRYEAKVHLDRMR and LEELARRCDDLVRLQEERAQQEELLERLSAEIQEELNQRW. Residues 473 to 508 are disordered; sequence GLAKSCPGNDEDSDTGLSSMHSQDSDSVPPVCESLV. Over residues 487 to 498 the composition is skewed to polar residues; the sequence is TGLSSMHSQDSD.

Expressed in neural progenitor cells (at protein level).

It is found in the cytoplasm. It localises to the cytosol. The protein resides in the cytoskeleton. Its subcellular location is the microtubule organizing center. The protein localises to the centrosome. It is found in the spindle pole. Plays an important role in regulating embryonic neurogenesis. The polypeptide is Ras association domain-containing protein 10 (Rassf10) (Mus musculus (Mouse)).